Consider the following 372-residue polypeptide: Protein Wnt-1 (372 aa).

The first 29 residues, 1–29 (MLKSTQVILIFILLISIVESLSWLALGLA), serve as a signal peptide directing secretion. 3 disulfide bridges follow: cysteine 77/cysteine 88, cysteine 130/cysteine 138, and cysteine 140/cysteine 158. Asparagine 87 is a glycosylation site (N-linked (GlcNAc...) asparagine). An N-linked (GlcNAc...) asparagine glycan is attached at asparagine 187. Cystine bridges form between cysteine 225/cysteine 239, cysteine 227/cysteine 234, cysteine 301/cysteine 332, cysteine 317/cysteine 327, cysteine 331/cysteine 371, cysteine 347/cysteine 362, cysteine 349/cysteine 359, and cysteine 354/cysteine 355. Serine 231 carries the O-palmitoleoyl serine; by mom-1 lipid modification.

Belongs to the Wnt family. Post-translationally, palmitoleoylation is required for efficient binding to frizzled receptors. Depalmitoleoylation leads to Wnt signaling pathway inhibition. Expressed in intestine, some head neurons and ventral nerve cord and pharyngeal neurons. Expressed in the tail and weakly expressed in the vulva and body wall muscles. Expressed highly in posterior dorsal and ventral muscle cells.

The protein resides in the secreted. The protein localises to the extracellular space. It localises to the extracellular matrix. Its subcellular location is the cytoplasm. It is found in the cell membrane. In terms of biological role, ligand for members of the frizzled family of seven transmembrane receptors. Probable developmental protein. May be a signaling molecule which affects the development of discrete regions of tissues. Is likely to signal over only few cell diameters. Binds receptor tyrosine kinase cam-1. Together with Wnt ligand cwn-2, regulates the migration of CAN, ALM, BDU and HSN neurons during embryogenesis, the migration of QL and QR neuroblast descendants during larval development, and polarity of ALM neurons. Also acts with the Wnt ligand egl-20 to direct HSN neuron migration. Acts through the Wnt receptor cfz-2 to direct ALM migration. Also plays a role in axon growth and guidance in HSN and male CP neurons. In addition, together with Wnt ligand cwn-2, negatively regulates developmental neurite pruning of AIM neurons probably by acting as a ligand for receptor tyrosine kinase cam-1. Probably by activating the Wnt/Frizzled pathway, may regulate vulva development. May act redundantly with other Wnt ligands such as cwn-2 and mom-2 to control seam cell polarity. The chain is Protein Wnt-1 (cwn-1) from Caenorhabditis elegans.